Here is a 158-residue protein sequence, read N- to C-terminus: NAD(P)H-quinone oxidoreductase subunit N (158 aa).

It belongs to the complex I NdhN subunit family. NDH-1 can be composed of about 15 different subunits; different subcomplexes with different compositions have been identified which probably have different functions.

Its subcellular location is the cellular thylakoid membrane. It catalyses the reaction a plastoquinone + NADH + (n+1) H(+)(in) = a plastoquinol + NAD(+) + n H(+)(out). The enzyme catalyses a plastoquinone + NADPH + (n+1) H(+)(in) = a plastoquinol + NADP(+) + n H(+)(out). Its function is as follows. NDH-1 shuttles electrons from an unknown electron donor, via FMN and iron-sulfur (Fe-S) centers, to quinones in the respiratory and/or the photosynthetic chain. The immediate electron acceptor for the enzyme in this species is believed to be plastoquinone. Couples the redox reaction to proton translocation, and thus conserves the redox energy in a proton gradient. Cyanobacterial NDH-1 also plays a role in inorganic carbon-concentration. The chain is NAD(P)H-quinone oxidoreductase subunit N from Synechococcus elongatus (strain ATCC 33912 / PCC 7942 / FACHB-805) (Anacystis nidulans R2).